Reading from the N-terminus, the 535-residue chain is uncharacterized protein (535 aa).

A run of 6 helical transmembrane segments spans residues 55-75 (LITI…IPII), 82-102 (FMPV…IMFV), 115-135 (IICF…ILRH), 143-163 (AFVL…LMLF), 201-221 (STIL…TLIM), and 346-366 (VSGP…NVFA).

Its subcellular location is the membrane. This is an uncharacterized protein from Schizosaccharomyces pombe (strain 972 / ATCC 24843) (Fission yeast).